The chain runs to 474 residues: tRNA-2-methylthio-N(6)-dimethylallyladenosine synthase (474 aa).

The region spanning 3–120 is the MTTase N-terminal domain; the sequence is KKLLIKTWGC…LPEMIKQSQT (118 aa). 6 residues coordinate [4Fe-4S] cluster: Cys12, Cys49, Cys83, Cys157, Cys161, and Cys164. In terms of domain architecture, Radical SAM core spans 143–375; sequence RAEGATAFVS…QQTINAQAMR (233 aa). In terms of domain architecture, TRAM spans 378–441; the sequence is RLMLATEQRV…ANSLRGELVR (64 aa).

This sequence belongs to the methylthiotransferase family. MiaB subfamily. Monomer. [4Fe-4S] cluster serves as cofactor.

Its subcellular location is the cytoplasm. It carries out the reaction N(6)-dimethylallyladenosine(37) in tRNA + (sulfur carrier)-SH + AH2 + 2 S-adenosyl-L-methionine = 2-methylsulfanyl-N(6)-dimethylallyladenosine(37) in tRNA + (sulfur carrier)-H + 5'-deoxyadenosine + L-methionine + A + S-adenosyl-L-homocysteine + 2 H(+). In terms of biological role, catalyzes the methylthiolation of N6-(dimethylallyl)adenosine (i(6)A), leading to the formation of 2-methylthio-N6-(dimethylallyl)adenosine (ms(2)i(6)A) at position 37 in tRNAs that read codons beginning with uridine. The protein is tRNA-2-methylthio-N(6)-dimethylallyladenosine synthase of Vibrio parahaemolyticus serotype O3:K6 (strain RIMD 2210633).